The chain runs to 1270 residues: Glycine betaine reductase ATRR (1270 aa).

The adenylation (A) domain stretch occupies residues 14 to 418 (FTQQVRASPN…MIKLRGYSVV (405 aa)). Residues 528 to 605 (KEDPIGIEDI…GHLDTVRAIR (78 aa)) form the Carrier domain. Ser-565 bears the O-(pantetheine 4'-phosphoryl)serine mark. The carboxylic acid reductase domain R1 stretch occupies residues 643-937 (KTVLLTGVTG…EPLSWDDWVA (295 aa)). Residues 1026–1256 (PLSGKVAVVT…IYALRQPEHV (231 aa)) form an aldehyde reductase domain R2 region.

The protein belongs to the NRP synthetase family.

The tetramethylammonium ion, which mimics the head group of glycine betaine, acts as a competitive inhibitor of ATRR A domain, whereas the potency decreased by three orders of magnitude with dimethylammonium. Choline is a mixed inhibitor for both glycine betaine reductase and aldehyde reductase activity but more potent in competition against glycine betaine in the first reduction step. Therefore, choline could act as a feedback inhibitor to regulate ATRR enzymatic activity. The lowered binding affinity of choline to R2 favors the release of choline after glycine betaine aldehyde reduction to avoid direct product inhibition. NRPS-like enzyme with an unusual domain architecture that converts back glycine betaine to choline via a 2-step reduction mechanism, and thereby can be an alternative source of choline. Permits direct reutilization of endogenously stored glycine betaine for on-demand biosynthesis of choline and choline derivatives, including phospholipid phosphatidylcholine (PC) which has an essential role in maintaining membrane integrity and functionality, or choline-O-sulfate, a mean for intracellular sulfate storage. Glycine betaine is activated by the adenylation (A) domain, and transferred to the thiolation (T) domain. Movement of the phosphopantetheine arm to the thioester reductase domain R1 then allows thioester reduction by NADPH of glycine betainoyl thioester to glycine betaine aldehyde, which is in turn reduced to choline by the aldehyde reductase domain R2. The sequence is that of Glycine betaine reductase ATRR from Emericella nidulans (strain FGSC A4 / ATCC 38163 / CBS 112.46 / NRRL 194 / M139) (Aspergillus nidulans).